A 1062-amino-acid polypeptide reads, in one-letter code: Carbamoyl phosphate synthase large chain (1062 aa).

The carboxyphosphate synthetic domain stretch occupies residues 1 to 401 (MPKRTDIHKI…AMQKAVRSLE (401 aa)). Residues Arg129, Arg169, Gly175, Gly176, Lys208, Ile210, Glu215, Gly241, Ile242, His243, Gln284, and Glu298 each contribute to the ATP site. Positions 133-327 (KELCKELGEP…IAKMAAKIAI (195 aa)) constitute an ATP-grasp 1 domain. Positions 284, 298, and 300 each coordinate Mg(2+). 3 residues coordinate Mn(2+): Gln284, Glu298, and Asn300. Residues 402 to 546 (IDEKDLYSET…YSTYDGENES (145 aa)) form an oligomerization domain region. The tract at residues 547–929 (HKSGKKSVIV…ALYKAFAGAK (383 aa)) is carbamoyl phosphate synthetic domain. The ATP-grasp 2 domain maps to 671 to 861 (DQIIKKLKLN…MAQVATRVIM (191 aa)). Arg707, Asp746, Leu748, Glu752, Gly777, Val778, His779, Ser780, Gln820, and Glu832 together coordinate ATP. Residues Gln820, Glu832, and Asn834 each contribute to the Mg(2+) site. Mn(2+)-binding residues include Gln820, Glu832, and Asn834. In terms of domain architecture, MGS-like spans 930–1062 (MQLPENGNVL…NRSFATDALK (133 aa)). The interval 930 to 1062 (MQLPENGNVL…NRSFATDALK (133 aa)) is allosteric domain.

The protein belongs to the CarB family. Composed of two chains; the small (or glutamine) chain promotes the hydrolysis of glutamine to ammonia, which is used by the large (or ammonia) chain to synthesize carbamoyl phosphate. Tetramer of heterodimers (alpha,beta)4. Requires Mg(2+) as cofactor. The cofactor is Mn(2+).

The enzyme catalyses hydrogencarbonate + L-glutamine + 2 ATP + H2O = carbamoyl phosphate + L-glutamate + 2 ADP + phosphate + 2 H(+). It catalyses the reaction hydrogencarbonate + NH4(+) + 2 ATP = carbamoyl phosphate + 2 ADP + phosphate + 2 H(+). Its pathway is amino-acid biosynthesis; L-arginine biosynthesis; carbamoyl phosphate from bicarbonate: step 1/1. The protein operates within pyrimidine metabolism; UMP biosynthesis via de novo pathway; (S)-dihydroorotate from bicarbonate: step 1/3. Large subunit of the glutamine-dependent carbamoyl phosphate synthetase (CPSase). CPSase catalyzes the formation of carbamoyl phosphate from the ammonia moiety of glutamine, carbonate, and phosphate donated by ATP, constituting the first step of 2 biosynthetic pathways, one leading to arginine and/or urea and the other to pyrimidine nucleotides. The large subunit (synthetase) binds the substrates ammonia (free or transferred from glutamine from the small subunit), hydrogencarbonate and ATP and carries out an ATP-coupled ligase reaction, activating hydrogencarbonate by forming carboxy phosphate which reacts with ammonia to form carbamoyl phosphate. This chain is Carbamoyl phosphate synthase large chain, found in Lactobacillus johnsonii (strain CNCM I-12250 / La1 / NCC 533).